A 373-amino-acid polypeptide reads, in one-letter code: Mannitol-1-phosphate 5-dehydrogenase (373 aa).

An NAD(+)-binding site is contributed by 3-14 (ALHFGAGNIGRG).

It belongs to the mannitol dehydrogenase family.

The catalysed reaction is D-mannitol 1-phosphate + NAD(+) = beta-D-fructose 6-phosphate + NADH + H(+). The protein is Mannitol-1-phosphate 5-dehydrogenase (mtlD) of Bacillus subtilis (strain 168).